Consider the following 312-residue polypeptide: Serine protease 48 (312 aa).

The first 22 residues, 1 to 22 (MGPAGLKVLLLLFLGAFQGSFT), serve as a signal peptide directing secretion. The 237-residue stretch at 40–276 (IVGGQDAALG…YQKWISAIIS (237 aa)) folds into the Peptidase S1 domain. An intrachain disulfide couples cysteine 65 to cysteine 81. Active-site charge relay system residues include histidine 80 and aspartate 126. N-linked (GlcNAc...) asparagine glycosylation occurs at asparagine 149. 3 disulfides stabilise this stretch: cysteine 160-cysteine 235, cysteine 190-cysteine 214, and cysteine 225-cysteine 253. Serine 229 (charge relay system) is an active-site residue. Asparagine 263 is a glycosylation site (N-linked (GlcNAc...) asparagine).

The protein belongs to the peptidase S1 family.

It localises to the secreted. In Mus musculus (Mouse), this protein is Serine protease 48 (Prss48).